Reading from the N-terminus, the 529-residue chain is T-complex protein 1 subunit delta (529 aa).

This sequence belongs to the TCP-1 chaperonin family. As to quaternary structure, heterooligomeric complex of about 850 to 900 kDa that forms two stacked rings, 12 to 16 nm in diameter.

The protein resides in the cytoplasm. Its function is as follows. Molecular chaperone; assists the folding of proteins upon ATP hydrolysis. Known to play a role, in vitro, in the folding of actin and tubulin. The sequence is that of T-complex protein 1 subunit delta (CCT4) from Eremothecium gossypii (strain ATCC 10895 / CBS 109.51 / FGSC 9923 / NRRL Y-1056) (Yeast).